We begin with the raw amino-acid sequence, 198 residues long: Dephospho-CoA kinase (198 aa).

A DPCK domain is found at 2-90 (LIAIVGKPGV…KLSLVTKPLL (89 aa)). ATP is bound at residue 10-15 (GVGKTS).

This sequence belongs to the CoaE family.

Its subcellular location is the cytoplasm. It carries out the reaction 3'-dephospho-CoA + ATP = ADP + CoA + H(+). The protein operates within cofactor biosynthesis; coenzyme A biosynthesis; CoA from (R)-pantothenate: step 5/5. In terms of biological role, catalyzes the phosphorylation of the 3'-hydroxyl group of dephosphocoenzyme A to form coenzyme A. The polypeptide is Dephospho-CoA kinase (Mycoplasma genitalium (strain ATCC 33530 / DSM 19775 / NCTC 10195 / G37) (Mycoplasmoides genitalium)).